A 689-amino-acid polypeptide reads, in one-letter code: Protein SDA1 homolog (689 aa).

Residues Lys254 to Asp319 are a coiled coil. Disordered stretches follow at residues Glu485–Trp512 and Lys606–Lys689. Residues Ser668–Leu681 are compositionally biased toward basic and acidic residues.

The protein belongs to the SDA1 family.

The protein localises to the nucleus. The protein resides in the nucleolus. Its function is as follows. Required for 60S pre-ribosomal subunits export to the cytoplasm. The sequence is that of Protein SDA1 homolog (sdad1) from Xenopus tropicalis (Western clawed frog).